We begin with the raw amino-acid sequence, 590 residues long: MIKMRVRFPTLVLLLGIVFLMAVSIGIAYGEKNVIKNHERPQEREQEERDPRQQPRPHHQEEQEREHRREEERDREPSRGRSESEESREEEREQRREPRREREQEQQPQHGRREEEEEWQPRRQRPQSRREEREQEQGSSSSSRRQSGYERREEREQEQEQGSRSDSRRQRNPYYFSSERFQTLYRNRNGQIRVLERFDQRTDRLENLQNYRIVEFQSKPNTLILPKHSDADYILVVLNGSATITIVNPDKRQSYNLENGDALRLPAGTTSYILNPDDNQNLRVVKLAIPINNPGNFYDFYPSSSKDQQSYFSGFSRNTLEATFNTRYEEIQRILLGNEDEQEDDEQRHGQEQSHQDEGVIVRVSKEQVQELRKYAQSSSRKGKPSKSGPFNLRSNKPIYSNKFGNFYEITPNRNPQAQDLDISLTFIEINEGALLLPHYNSKAIFVVLVDEGEGNYELVGIRDQQRQQDEQEVRRYSARLSEGDIFVIPAGHPISINASSNLRLLGFGINADENQRNFLAGSEDNVIRQLDTEVKGLTFPGSTEDVERLIKNQQQSYFANAQPQQQQQREREGRRGRRGHISSILSTLY.

Residues 1 to 30 (MIKMRVRFPTLVLLLGIVFLMAVSIGIAYG) form the signal peptide. The segment covering 38–105 (HERPQEREQE…REPRREREQE (68 aa)) has biased composition (basic and acidic residues). A disordered region spans residues 38–175 (HERPQEREQE…DSRRQRNPYY (138 aa)). Low complexity predominate over residues 137-146 (QGSSSSSRRQ). In terms of domain architecture, Cupin type-1 1 spans 174–332 (YYFSSERFQT…TFNTRYEEIQ (159 aa)). Residue N239 is glycosylated (N-linked (GlcNAc...) asparagine). 2 disordered regions span residues 340–362 (DEQE…GVIV) and 374–396 (KYAQ…LRSN). Basic and acidic residues predominate over residues 346–362 (EQRHGQEQSHQDEGVIV). Residues 391–548 (FNLRSNKPIY…TFPGSTEDVE (158 aa)) enclose the Cupin type-1 2 domain. N498 carries an N-linked (GlcNAc...) asparagine glycan. Residues 559-579 (FANAQPQQQQQREREGRRGRR) are disordered.

This sequence belongs to the 7S seed storage protein family. In terms of assembly, component of globulins complexes which accumulate in seeds.

Seed storage protein. Accumulates during seed development and is hydrolyzed after germination to provide a carbon and nitrogen source for the developing seedling. This Lupinus angustifolius (Narrow-leaved blue lupine) protein is Conglutin beta 4.